We begin with the raw amino-acid sequence, 744 residues long: Adenosylcobalamin-dependent ribonucleoside-triphosphate reductase (744 aa).

Cysteine 120 and cysteine 424 form a disulfide bridge. The segment at 148–159 is effector region-1; the sequence is SMPFSFLFDQLM. The effector region-2 stretch occupies residues 169-318; that stretch reads VDDNINQIPQ…ICNLIGKTVV (150 aa). Residues cysteine 413 and glutamate 415 contribute to the active site. The adenosylcobalamin-binding-1 stretch occupies residues 570 to 631; it reads FHYAGYLIQR…SKNFASAGTV (62 aa). Residues 690-729 are adenosylcobalamin-binding-2; it reads LKQAPKEPINKKAYEDRVAMITGDVKEVFENQNKDQKGLE.

Belongs to the class II ribonucleoside-triphosphate reductase family. As to quaternary structure, monomer. Requires adenosylcob(III)alamin as cofactor.

The catalysed reaction is a 2'-deoxyribonucleoside 5'-triphosphate + [thioredoxin]-disulfide + H2O = a ribonucleoside 5'-triphosphate + [thioredoxin]-dithiol. Its activity is regulated as follows. Allosterically regulated by ATP and dNTP. The protein is Adenosylcobalamin-dependent ribonucleoside-triphosphate reductase (rtpR) of Lactobacillus helveticus (strain DPC 4571).